We begin with the raw amino-acid sequence, 362 residues long: Myricetin 3'/5'-O-methyltransferase 1 (362 aa).

Asp-229 contacts S-adenosyl-L-methionine. The active-site Proton acceptor is the His-267.

This sequence belongs to the class I-like SAM-binding methyltransferase superfamily. Cation-independent O-methyltransferase family. Homodimer. As to expression, mainly expressed in leaves secreting glandular trichomes types 1 and 4 and, to a lesser extent, in storage trichomes type 6.

It catalyses the reaction myricetin + S-adenosyl-L-methionine = laricitrin + S-adenosyl-L-homocysteine + H(+). The enzyme catalyses laricitrin + S-adenosyl-L-methionine = syringetin + S-adenosyl-L-homocysteine + H(+). The catalysed reaction is a 3'-hydroxyflavone + S-adenosyl-L-methionine = a 3'-methoxyflavone + S-adenosyl-L-homocysteine + H(+). It carries out the reaction a 5'-hydroxy-3'-methoxyflavone + S-adenosyl-L-methionine = a 3',5'-dimethoxyflavone + S-adenosyl-L-homocysteine + H(+). It catalyses the reaction quercetin + S-adenosyl-L-methionine = isorhamnetin + S-adenosyl-L-homocysteine + H(+). The enzyme catalyses rhamnetin + S-adenosyl-L-methionine = rhamnacene + S-adenosyl-L-homocysteine + H(+). The catalysed reaction is 3',4',5,7-tetrahydroxy-3-methoxyflavone + S-adenosyl-L-methionine = 3,3'-O-dimethylquercetin + S-adenosyl-L-homocysteine + H(+). It participates in flavonoid metabolism. Its function is as follows. Flavonoid 3'/5'-O-methyltransferase involved in the biosynthesis of polymethoxylated flavonoids natural products such as myricetin derivatives, aroma compounds possessing antioxidant properties and exhibiting pharmacological activities such as anti-carcinogen, anti-viral, anti-thrombotic, anti-diabetic, anti-atherosclerotic, and anti-inflammatory effects. Catalyzes S-adenosylmethionine-dependent regioselective 3'/5'-O-methylation of flavonoids; active on various hydroxylated flavonoid substrates, including myricetin and quercetin, but inactive toward kaempferol. Mediates the formation of 3'-methyl derivatives from quercetin, myricetin, 3-methyl quercetin and 7-methyl quercetin (rhamnetin), producing 3'-methyl quercetin (isorhamnetin), 3'-methyl myricetin (laricitrin), 3,3'-dimethyl quercetin (3-O-methylisorhamnetin) and 7,3'-dimethyl quercetin (7-O-methylisorhamnetin), respectively. Triggers the 5'-O-methylation of 3'-methyl myricetin (laricitrin), thus leading to production of 3',5'-dimethyl myricetin (syringetin). The sequence is that of Myricetin 3'/5'-O-methyltransferase 1 from Solanum habrochaites (Wild tomato).